The sequence spans 290 residues: MKSGFAAILGRPSTGKSTLLNSICGHKISIISPIPQTTRNKIKGIFTDDRGQIIFIDTPGFHLSKKKFNIAMMKNIHSSIGEVELILYIIDIQDKPGEEENKILEIIKNSKIKFLVLLNKVDLKNTKIKEITQFLKEKEIEDNNIIKISAEKKINTEELKNKIYENFSEGPLYYPQEYYTDQEINFRISEIIREKAIENLKEELPYSLYVDIDILENKKGSLFIRANIFVANESQKGIIVGKNGKEIKSIGERARITIAKIFETKCNLFLQVKLKKNWNKEDKLIKRLIN.

Positions 2–169 (KSGFAAILGR…KNKIYENFSE (168 aa)) constitute an Era-type G domain. Positions 10–17 (GRPSTGKS) are G1. 10–17 (GRPSTGKS) contacts GTP. The segment at 36-40 (QTTRN) is G2. The interval 57–60 (DTPG) is G3. Residues 57 to 61 (DTPGF) and 119 to 122 (NKVD) contribute to the GTP site. Residues 119–122 (NKVD) are G4. Residues 148–150 (ISA) are G5. The 77-residue stretch at 200 to 276 (LKEELPYSLY…NLFLQVKLKK (77 aa)) folds into the KH type-2 domain.

The protein belongs to the TRAFAC class TrmE-Era-EngA-EngB-Septin-like GTPase superfamily. Era GTPase family. Monomer.

It localises to the cytoplasm. The protein resides in the cell inner membrane. An essential GTPase that binds both GDP and GTP, with rapid nucleotide exchange. Plays a role in 16S rRNA processing and 30S ribosomal subunit biogenesis and possibly also in cell cycle regulation and energy metabolism. This Borrelia garinii subsp. bavariensis (strain ATCC BAA-2496 / DSM 23469 / PBi) (Borreliella bavariensis) protein is GTPase Era.